Consider the following 424-residue polypeptide: UPF0597 protein Sputw3181_2955 (424 aa).

Belongs to the UPF0597 family.

This chain is UPF0597 protein Sputw3181_2955, found in Shewanella sp. (strain W3-18-1).